The primary structure comprises 493 residues: Bifunctional protein GlmU (493 aa).

Residues 1 to 246 (MTGELDVDGE…SWLVAGINDR (246 aa)) are pyrophosphorylase. UDP-N-acetyl-alpha-D-glucosamine contacts are provided by residues 21 to 24 (LAAG), lysine 35, glutamine 88, 93 to 94 (GT), 117 to 119 (SGD), glycine 156, glutamate 171, asparagine 186, and asparagine 244. Mg(2+) is bound at residue aspartate 119. A Mg(2+)-binding site is contributed by asparagine 244. The tract at residues 247–267 (VQLTAAATELNARIIRRWQLA) is linker. An N-acetyltransferase region spans residues 268–493 (GVTIHDPRTT…DGPADDASDA (226 aa)). 2 residues coordinate UDP-N-acetyl-alpha-D-glucosamine: arginine 349 and lysine 367. The active-site Proton acceptor is histidine 379. The UDP-N-acetyl-alpha-D-glucosamine site is built by tyrosine 382 and asparagine 393. Acetyl-CoA contacts are provided by residues alanine 396, 402-403 (NY), serine 421, and alanine 439. Positions 470–493 (RPGTPEARAAVEAADGPADDASDA) are disordered.

This sequence in the N-terminal section; belongs to the N-acetylglucosamine-1-phosphate uridyltransferase family. The protein in the C-terminal section; belongs to the transferase hexapeptide repeat family. As to quaternary structure, homotrimer. The cofactor is Mg(2+).

The protein localises to the cytoplasm. It catalyses the reaction alpha-D-glucosamine 1-phosphate + acetyl-CoA = N-acetyl-alpha-D-glucosamine 1-phosphate + CoA + H(+). The enzyme catalyses N-acetyl-alpha-D-glucosamine 1-phosphate + UTP + H(+) = UDP-N-acetyl-alpha-D-glucosamine + diphosphate. It functions in the pathway nucleotide-sugar biosynthesis; UDP-N-acetyl-alpha-D-glucosamine biosynthesis; N-acetyl-alpha-D-glucosamine 1-phosphate from alpha-D-glucosamine 6-phosphate (route II): step 2/2. It participates in nucleotide-sugar biosynthesis; UDP-N-acetyl-alpha-D-glucosamine biosynthesis; UDP-N-acetyl-alpha-D-glucosamine from N-acetyl-alpha-D-glucosamine 1-phosphate: step 1/1. The protein operates within bacterial outer membrane biogenesis; LPS lipid A biosynthesis. In terms of biological role, catalyzes the last two sequential reactions in the de novo biosynthetic pathway for UDP-N-acetylglucosamine (UDP-GlcNAc). The C-terminal domain catalyzes the transfer of acetyl group from acetyl coenzyme A to glucosamine-1-phosphate (GlcN-1-P) to produce N-acetylglucosamine-1-phosphate (GlcNAc-1-P), which is converted into UDP-GlcNAc by the transfer of uridine 5-monophosphate (from uridine 5-triphosphate), a reaction catalyzed by the N-terminal domain. The polypeptide is Bifunctional protein GlmU (Clavibacter sepedonicus (Clavibacter michiganensis subsp. sepedonicus)).